A 373-amino-acid chain; its full sequence is Queuine tRNA-ribosyltransferase (373 aa).

D91 (proton acceptor) is an active-site residue. Residues 91–95, D145, Q187, and G214 each bind substrate; that span reads DSGGF. Positions 245-251 are RNA binding; the sequence is GVGKPED. The active-site Nucleophile is D264. Residues 269–273 are RNA binding; important for wobble base 34 recognition; that stretch reads TRNAR. Zn(2+)-binding residues include C302, C304, C307, and H333.

Belongs to the queuine tRNA-ribosyltransferase family. As to quaternary structure, homodimer. Within each dimer, one monomer is responsible for RNA recognition and catalysis, while the other monomer binds to the replacement base PreQ1. Zn(2+) is required as a cofactor.

It catalyses the reaction 7-aminomethyl-7-carbaguanine + guanosine(34) in tRNA = 7-aminomethyl-7-carbaguanosine(34) in tRNA + guanine. The protein operates within tRNA modification; tRNA-queuosine biosynthesis. Its function is as follows. Catalyzes the base-exchange of a guanine (G) residue with the queuine precursor 7-aminomethyl-7-deazaguanine (PreQ1) at position 34 (anticodon wobble position) in tRNAs with GU(N) anticodons (tRNA-Asp, -Asn, -His and -Tyr). Catalysis occurs through a double-displacement mechanism. The nucleophile active site attacks the C1' of nucleotide 34 to detach the guanine base from the RNA, forming a covalent enzyme-RNA intermediate. The proton acceptor active site deprotonates the incoming PreQ1, allowing a nucleophilic attack on the C1' of the ribose to form the product. After dissociation, two additional enzymatic reactions on the tRNA convert PreQ1 to queuine (Q), resulting in the hypermodified nucleoside queuosine (7-(((4,5-cis-dihydroxy-2-cyclopenten-1-yl)amino)methyl)-7-deazaguanosine). The polypeptide is Queuine tRNA-ribosyltransferase (Idiomarina loihiensis (strain ATCC BAA-735 / DSM 15497 / L2-TR)).